The chain runs to 91 residues: Acylphosphatase (91 aa).

In terms of domain architecture, Acylphosphatase-like spans cysteine 3 to histidine 91. Active-site residues include arginine 18 and asparagine 36.

This sequence belongs to the acylphosphatase family.

The enzyme catalyses an acyl phosphate + H2O = a carboxylate + phosphate + H(+). The sequence is that of Acylphosphatase (acyP) from Dehalococcoides mccartyi (strain ATCC BAA-2100 / JCM 16839 / KCTC 5957 / BAV1).